A 98-amino-acid polypeptide reads, in one-letter code: NADH-ubiquinone oxidoreductase chain 4L (98 aa).

The next 3 membrane-spanning stretches (helical) occupy residues 1-21 (MSLTYMNMFMAFTISLLGLLM), 29-49 (SLLCLEGMMLSLFVMMTMVIL), and 61-81 (IILLVFAACEAALGLSLLVMV).

Belongs to the complex I subunit 4L family. Core subunit of respiratory chain NADH dehydrogenase (Complex I) which is composed of 45 different subunits.

It is found in the mitochondrion inner membrane. The enzyme catalyses a ubiquinone + NADH + 5 H(+)(in) = a ubiquinol + NAD(+) + 4 H(+)(out). Functionally, core subunit of the mitochondrial membrane respiratory chain NADH dehydrogenase (Complex I) which catalyzes electron transfer from NADH through the respiratory chain, using ubiquinone as an electron acceptor. Part of the enzyme membrane arm which is embedded in the lipid bilayer and involved in proton translocation. The protein is NADH-ubiquinone oxidoreductase chain 4L (MT-ND4L) of Vampyressa thyone (Northern little yellow-eared bat).